Reading from the N-terminus, the 548-residue chain is Glucose-6-phosphate isomerase (548 aa).

E355 acts as the Proton donor in catalysis. Catalysis depends on residues H386 and K514.

It belongs to the GPI family.

The protein resides in the cytoplasm. The enzyme catalyses alpha-D-glucose 6-phosphate = beta-D-fructose 6-phosphate. The protein operates within carbohydrate biosynthesis; gluconeogenesis. Its pathway is carbohydrate degradation; glycolysis; D-glyceraldehyde 3-phosphate and glycerone phosphate from D-glucose: step 2/4. In terms of biological role, catalyzes the reversible isomerization of glucose-6-phosphate to fructose-6-phosphate. The protein is Glucose-6-phosphate isomerase of Hamiltonella defensa subsp. Acyrthosiphon pisum (strain 5AT).